The primary structure comprises 57 residues: Large ribosomal subunit protein bL32 (57 aa).

Residues 1-22 (MAVPKKKTSKAKRDQRRAHWRR) show a composition bias toward basic residues. The segment at 1–35 (MAVPKKKTSKAKRDQRRAHWRRQASSQAQKALSLG) is disordered.

This sequence belongs to the bacterial ribosomal protein bL32 family.

This Synechocystis sp. (strain ATCC 27184 / PCC 6803 / Kazusa) protein is Large ribosomal subunit protein bL32 (rpmF).